The chain runs to 517 residues: Lysophosphatidylcholine acyltransferase 2B (517 aa).

N-linked (GlcNAc...) asparagine glycosylation occurs at asparagine 29. The next 3 helical transmembrane spans lie at 70–90 (IVFLFLLLWPVALLSTINLPI), 103–123 (LIKPVFIFLLRLAFFCAGFLI), and 137–157 (IFVVAPHSTFFDAIAVIVAGL). Positions 143-148 (HSTFFD) match the HXXXXD motif motif. EF-hand domains follow at residues 388 to 423 (PISEPLRQLFSLFDRNQDGTIDFREYVIGLTVLCNP) and 425 to 460 (NTEKILQMSFKLFDLDEDGYITEQELTTMLRAAFGV). Ca(2+) contacts are provided by aspartate 401, asparagine 403, aspartate 405, threonine 407, glutamate 412, aspartate 438, aspartate 440, aspartate 442, tyrosine 444, and glutamate 449.

The protein belongs to the 1-acyl-sn-glycerol-3-phosphate acyltransferase family.

The protein resides in the membrane. Its pathway is lipid metabolism; phospholipid metabolism. Functionally, probable acetyltransferase. This chain is Lysophosphatidylcholine acyltransferase 2B (Lpcat2b), found in Rattus norvegicus (Rat).